Consider the following 223-residue polypeptide: UPF0758 protein Cvib_1178 (223 aa).

Residues 100 to 222 (KIQGARDVYE…WYSFRENNQL (123 aa)) form the MPN domain. The Zn(2+) site is built by His-171, His-173, and Asp-184. Residues 171–184 (HNHPSGDTEPSNAD) carry the JAMM motif motif.

Belongs to the UPF0758 family.

The sequence is that of UPF0758 protein Cvib_1178 from Chlorobium phaeovibrioides (strain DSM 265 / 1930) (Prosthecochloris vibrioformis (strain DSM 265)).